The following is a 378-amino-acid chain: Cysteine endopeptidase RepA (378 aa).

The signal sequence occupies residues 1 to 24 (MLRCFLVAAAAVALAAAAAAPARA). Residues 25 to 141 (IPFTESDLSS…SFRYGGDDED (117 aa)) constitute a propeptide, activation peptide. 3 cysteine pairs are disulfide-bonded: cysteine 164–cysteine 206, cysteine 198–cysteine 239, and cysteine 297–cysteine 350. Cysteine 167 is an active-site residue. Residues histidine 303 and asparagine 324 contribute to the active site.

Belongs to the peptidase C1 family.

The protein resides in the protein storage vacuole. Functionally, cysteine endopeptidase that digests in vitro both the acidic and basic subunits of glutelin, the major seed storage protein of rice. This is Cysteine endopeptidase RepA from Oryza sativa subsp. japonica (Rice).